The primary structure comprises 319 residues: Triacylglycerol lipase (319 aa).

The 279-residue stretch at 10–288 (PVILVHGLAG…TSYHWNHLDE (279 aa)) folds into the AB hydrolase-1 domain. Residue Leu-17 participates in substrate binding. Ser-87 serves as the catalytic Nucleophile. Residue Gln-88 participates in substrate binding. The cysteines at positions 190 and 269 are disulfide-linked. Asp-241 serves as a coordination point for Ca(2+). Residues Asp-263 and His-285 each act as charge relay system in the active site. Asp-287, Gln-291, and Val-295 together coordinate Ca(2+).

This sequence belongs to the AB hydrolase superfamily. Pseudomonas lipase family. Monomer. Interacts with lipase-specific foldase Lif. The cofactor is Ca(2+).

The protein localises to the secreted. The catalysed reaction is a triacylglycerol + H2O = a diacylglycerol + a fatty acid + H(+). In terms of biological role, catalyzes the hydrolysis of triacylglycerol. This chain is Triacylglycerol lipase, found in Pseudarthrobacter phenanthrenivorans (Arthrobacter phenanthrenivorans).